The sequence spans 505 residues: GMP synthase [glutamine-hydrolyzing] (505 aa).

Positions 3-190 constitute a Glutamine amidotransferase type-1 domain; it reads KVLVVNFGGQ…LRKIARISDV (188 aa). The active-site Nucleophile is Cys80. Catalysis depends on residues His164 and Glu166. In terms of domain architecture, GMPS ATP-PPase spans 191-380; sequence WRPEDQITRI…LGLPEDVVYR (190 aa). 218–224 is an ATP binding site; the sequence is SGGVDST.

The catalysed reaction is XMP + L-glutamine + ATP + H2O = GMP + L-glutamate + AMP + diphosphate + 2 H(+). It participates in purine metabolism; GMP biosynthesis; GMP from XMP (L-Gln route): step 1/1. Functionally, catalyzes the synthesis of GMP from XMP. This Pyrobaculum aerophilum (strain ATCC 51768 / DSM 7523 / JCM 9630 / CIP 104966 / NBRC 100827 / IM2) protein is GMP synthase [glutamine-hydrolyzing].